Consider the following 687-residue polypeptide: Amine oxidase [copper-containing] gamma 2 (687 aa).

Positions 1–24 (MVELSFSQLLVLLLSLLFLFTTLA) are cleaved as a signal peptide. The N-linked (GlcNAc...) asparagine glycan is linked to N154. C169 and C191 form a disulfide bridge. N244 is a glycosylation site (N-linked (GlcNAc...) asparagine). 333 to 344 (YMDAGEFGLGPS) contacts substrate. Catalysis depends on D335, which acts as the Proton acceptor. C354 and C380 are joined by a disulfide. 420 to 425 (VGNYDY) is a binding site for substrate. The Schiff-base intermediate with substrate; via topaquinone role is filled by Y423. The residue at position 423 (Y423) is a 2',4',5'-topaquinone. Positions 480 and 482 each coordinate Cu cation. Mn(2+)-binding residues include D489, M490, and D491. N497 and N598 each carry an N-linked (GlcNAc...) asparagine glycan. Mn(2+) contacts are provided by D632 and I633. H643 is a binding site for Cu cation.

The protein belongs to the copper/topaquinone oxidase family. As to quaternary structure, homodimer. It depends on Cu cation as a cofactor. Requires Zn(2+) as cofactor. The cofactor is L-topaquinone. Mn(2+) is required as a cofactor. In terms of processing, topaquinone (TPQ) is generated by copper-dependent autoxidation of a specific tyrosyl residue. As to expression, expressed in roots, leaves and cotyledons.

The protein resides in the secreted. The protein localises to the extracellular space. It localises to the apoplast. The enzyme catalyses a primary methyl amine + O2 + H2O = an aldehyde + H2O2 + NH4(+). It functions in the pathway amine and polyamine degradation; putrescine degradation. Functionally, copper amine oxidase that can use putrescine and spermidine as substrates. The protein is Amine oxidase [copper-containing] gamma 2 of Arabidopsis thaliana (Mouse-ear cress).